The chain runs to 315 residues: Ribose-phosphate pyrophosphokinase (315 aa).

Residues 37–39 (DGE) and 96–97 (RQ) contribute to the ATP site. Mg(2+) is bound by residues His131 and Asp170. Lys194 is a catalytic residue. D-ribose 5-phosphate contacts are provided by residues Arg196, Asp220, and 224–228 (DTGGT).

This sequence belongs to the ribose-phosphate pyrophosphokinase family. Class I subfamily. Homohexamer. The cofactor is Mg(2+).

It is found in the cytoplasm. The enzyme catalyses D-ribose 5-phosphate + ATP = 5-phospho-alpha-D-ribose 1-diphosphate + AMP + H(+). The protein operates within metabolic intermediate biosynthesis; 5-phospho-alpha-D-ribose 1-diphosphate biosynthesis; 5-phospho-alpha-D-ribose 1-diphosphate from D-ribose 5-phosphate (route I): step 1/1. Involved in the biosynthesis of the central metabolite phospho-alpha-D-ribosyl-1-pyrophosphate (PRPP) via the transfer of pyrophosphoryl group from ATP to 1-hydroxyl of ribose-5-phosphate (Rib-5-P). The sequence is that of Ribose-phosphate pyrophosphokinase from Escherichia coli O6:H1 (strain CFT073 / ATCC 700928 / UPEC).